The primary structure comprises 269 residues: 4-hydroxy-tetrahydrodipicolinate reductase (269 aa).

Residues 11–16 and glutamate 37 contribute to the NAD(+) site; that span reads GASGRM. Arginine 38 lines the NADP(+) pocket. NAD(+) is bound by residues 101 to 103 and 125 to 128; these read GTT and AGNM. The active-site Proton donor/acceptor is the histidine 158. Histidine 159 serves as a coordination point for (S)-2,3,4,5-tetrahydrodipicolinate. The active-site Proton donor is lysine 162. Position 168–169 (168–169) interacts with (S)-2,3,4,5-tetrahydrodipicolinate; it reads GT.

Belongs to the DapB family.

It localises to the cytoplasm. The catalysed reaction is (S)-2,3,4,5-tetrahydrodipicolinate + NAD(+) + H2O = (2S,4S)-4-hydroxy-2,3,4,5-tetrahydrodipicolinate + NADH + H(+). The enzyme catalyses (S)-2,3,4,5-tetrahydrodipicolinate + NADP(+) + H2O = (2S,4S)-4-hydroxy-2,3,4,5-tetrahydrodipicolinate + NADPH + H(+). It participates in amino-acid biosynthesis; L-lysine biosynthesis via DAP pathway; (S)-tetrahydrodipicolinate from L-aspartate: step 4/4. Its function is as follows. Catalyzes the conversion of 4-hydroxy-tetrahydrodipicolinate (HTPA) to tetrahydrodipicolinate. This Cereibacter sphaeroides (strain KD131 / KCTC 12085) (Rhodobacter sphaeroides) protein is 4-hydroxy-tetrahydrodipicolinate reductase.